The sequence spans 257 residues: Small ribosomal subunit protein uS2 (257 aa).

It belongs to the universal ribosomal protein uS2 family.

In Trichlorobacter lovleyi (strain ATCC BAA-1151 / DSM 17278 / SZ) (Geobacter lovleyi), this protein is Small ribosomal subunit protein uS2.